Consider the following 453-residue polypeptide: Bifunctional protein GlmU (453 aa).

Residues Met-1–Lys-225 form a pyrophosphorylase region. UDP-N-acetyl-alpha-D-glucosamine is bound by residues Leu-6 to Gly-9, Lys-20, Gln-71, Gly-76 to Thr-77, Tyr-98 to Asp-100, Gly-135, Glu-150, Asn-165, and Asn-223. Residue Asp-100 participates in Mg(2+) binding. Asn-223 lines the Mg(2+) pocket. The tract at residues Ala-226–Glu-246 is linker. The N-acetyltransferase stretch occupies residues Gly-247–Ser-453. Residues Arg-329 and Lys-347 each coordinate UDP-N-acetyl-alpha-D-glucosamine. The Proton acceptor role is filled by His-359. UDP-N-acetyl-alpha-D-glucosamine contacts are provided by Tyr-362 and Asn-373. Residues Ala-376, Asn-382–Tyr-383, Ser-401, and Ala-419 each bind acetyl-CoA.

This sequence in the N-terminal section; belongs to the N-acetylglucosamine-1-phosphate uridyltransferase family. In the C-terminal section; belongs to the transferase hexapeptide repeat family. In terms of assembly, homotrimer. Requires Mg(2+) as cofactor.

The protein localises to the cytoplasm. The enzyme catalyses alpha-D-glucosamine 1-phosphate + acetyl-CoA = N-acetyl-alpha-D-glucosamine 1-phosphate + CoA + H(+). It carries out the reaction N-acetyl-alpha-D-glucosamine 1-phosphate + UTP + H(+) = UDP-N-acetyl-alpha-D-glucosamine + diphosphate. The protein operates within nucleotide-sugar biosynthesis; UDP-N-acetyl-alpha-D-glucosamine biosynthesis; N-acetyl-alpha-D-glucosamine 1-phosphate from alpha-D-glucosamine 6-phosphate (route II): step 2/2. It participates in nucleotide-sugar biosynthesis; UDP-N-acetyl-alpha-D-glucosamine biosynthesis; UDP-N-acetyl-alpha-D-glucosamine from N-acetyl-alpha-D-glucosamine 1-phosphate: step 1/1. It functions in the pathway bacterial outer membrane biogenesis; LPS lipid A biosynthesis. Catalyzes the last two sequential reactions in the de novo biosynthetic pathway for UDP-N-acetylglucosamine (UDP-GlcNAc). The C-terminal domain catalyzes the transfer of acetyl group from acetyl coenzyme A to glucosamine-1-phosphate (GlcN-1-P) to produce N-acetylglucosamine-1-phosphate (GlcNAc-1-P), which is converted into UDP-GlcNAc by the transfer of uridine 5-monophosphate (from uridine 5-triphosphate), a reaction catalyzed by the N-terminal domain. The chain is Bifunctional protein GlmU from Burkholderia vietnamiensis (strain G4 / LMG 22486) (Burkholderia cepacia (strain R1808)).